A 77-amino-acid polypeptide reads, in one-letter code: MAVGTTTGELRELSDDELTDKLRESKEELFNLRFQMATGQLANNRRLRVVRQEIARVYTVLRERELGLAAGPGGEDS.

The protein belongs to the universal ribosomal protein uL29 family.

This Mycolicibacterium gilvum (strain PYR-GCK) (Mycobacterium gilvum (strain PYR-GCK)) protein is Large ribosomal subunit protein uL29.